A 507-amino-acid chain; its full sequence is Maturase K (507 aa).

The protein belongs to the intron maturase 2 family. MatK subfamily.

The protein resides in the plastid. It is found in the chloroplast. Functionally, usually encoded in the trnK tRNA gene intron. Probably assists in splicing its own and other chloroplast group II introns. In Euryale ferox (Gorgon plant), this protein is Maturase K.